The primary structure comprises 340 residues: Dihydroorotate dehydrogenase (quinone) (340 aa).

Residues 61–65 (AGLDK) and T85 each bind FMN. K65 is a substrate binding site. 110-114 (NRMGF) contacts substrate. The FMN site is built by N138 and N171. Substrate is bound at residue N171. S174 (nucleophile) is an active-site residue. N176 contributes to the substrate binding site. Residues K216 and T244 each coordinate FMN. 245 to 246 (NT) is a substrate binding site. Residues G267, G296, and 317–318 (YT) contribute to the FMN site.

It belongs to the dihydroorotate dehydrogenase family. Type 2 subfamily. As to quaternary structure, monomer. FMN serves as cofactor.

It localises to the cell membrane. It catalyses the reaction (S)-dihydroorotate + a quinone = orotate + a quinol. It participates in pyrimidine metabolism; UMP biosynthesis via de novo pathway; orotate from (S)-dihydroorotate (quinone route): step 1/1. In terms of biological role, catalyzes the conversion of dihydroorotate to orotate with quinone as electron acceptor. The sequence is that of Dihydroorotate dehydrogenase (quinone) from Marinobacter nauticus (strain ATCC 700491 / DSM 11845 / VT8) (Marinobacter aquaeolei).